We begin with the raw amino-acid sequence, 90 residues long: U7-theraphotoxin-Hhn1j (90 aa).

The signal sequence occupies residues 1 to 19 (MKTAIFTVVLALAVFAVLS). The propeptide occupies 20-50 (FGWEANEKALSEEFTELIHEKEAASETEARE). 3 cysteine pairs are disulfide-bonded: cysteine 51/cysteine 65, cysteine 58/cysteine 70, and cysteine 64/cysteine 81.

Belongs to the neurotoxin 10 (Hwtx-1) family. 13 (Hntx-13) subfamily. Expressed by the venom gland.

Its subcellular location is the secreted. In terms of biological role, ion channel inhibitor. This chain is U7-theraphotoxin-Hhn1j, found in Cyriopagopus hainanus (Chinese bird spider).